We begin with the raw amino-acid sequence, 147 residues long: uncharacterized protein (147 aa).

This is an uncharacterized protein from Mycoplasma genitalium (strain ATCC 33530 / DSM 19775 / NCTC 10195 / G37) (Mycoplasmoides genitalium).